A 622-amino-acid polypeptide reads, in one-letter code: Chaperone protein HscA homolog (622 aa).

This sequence belongs to the heat shock protein 70 family.

Functionally, chaperone involved in the maturation of iron-sulfur cluster-containing proteins. Has a low intrinsic ATPase activity which is markedly stimulated by HscB. This Methylobacillus flagellatus (strain ATCC 51484 / DSM 6875 / VKM B-1610 / KT) protein is Chaperone protein HscA homolog.